The sequence spans 420 residues: L-cysteine:1D-myo-inositol 2-amino-2-deoxy-alpha-D-glucopyranoside ligase (420 aa).

Cys48 contributes to the Zn(2+) binding site. L-cysteinyl-5'-AMP is bound by residues 48-51 (CGIT), Thr63, and 86-88 (NIT). Residues 50–60 (ITPYDSTHLGH) carry the 'HIGH' region motif. Positions 192-197 (ERGGDP) match the 'ERGGDP' region motif. Residue Trp232 coordinates L-cysteinyl-5'-AMP. Cys236 contributes to the Zn(2+) binding site. 254–256 (GSD) contacts L-cysteinyl-5'-AMP. Position 261 (His261) interacts with Zn(2+). Ile288 lines the L-cysteinyl-5'-AMP pocket. Residues 294–298 (KMSKS) carry the 'KMSKS' region motif.

The protein belongs to the class-I aminoacyl-tRNA synthetase family. MshC subfamily. Monomer. Zn(2+) serves as cofactor.

It carries out the reaction 1D-myo-inositol 2-amino-2-deoxy-alpha-D-glucopyranoside + L-cysteine + ATP = 1D-myo-inositol 2-(L-cysteinylamino)-2-deoxy-alpha-D-glucopyranoside + AMP + diphosphate + H(+). Its function is as follows. Catalyzes the ATP-dependent condensation of GlcN-Ins and L-cysteine to form L-Cys-GlcN-Ins. The polypeptide is L-cysteine:1D-myo-inositol 2-amino-2-deoxy-alpha-D-glucopyranoside ligase (Corynebacterium glutamicum (strain R)).